Reading from the N-terminus, the 283-residue chain is uncharacterized protein (283 aa).

Asn15 is a glycosylation site (N-linked (GlcNAc...) asparagine). Residues 15-81 (NATASTVFAI…QELNIALKVQ (67 aa)) enclose the PQ-loop 1 domain. The next 6 helical transmembrane spans lie at 19–39 (STVF…PQII), 48–68 (EGLD…LSVY), 108–128 (ALFV…MLIL), 138–158 (VEWP…IGFL), 170–190 (VTGI…FSFL), and 206–226 (GLLF…NVLL). Positions 149 to 204 (ATVLVNIGFLPQYISIFRARAVTGISYLFLAIDSSGSLFSFLSLPFDRWDVLAAVD) constitute a PQ-loop 2 domain. N-linked (GlcNAc...) asparagine glycosylation occurs at Asn228.

The protein resides in the membrane. This is an uncharacterized protein from Schizosaccharomyces pombe (strain 972 / ATCC 24843) (Fission yeast).